We begin with the raw amino-acid sequence, 312 residues long: Pre-mRNA-splicing factor 38A (312 aa).

An N-terminal protein interaction domain region spans residues 1–179 (MANRTVKDAH…VLEEAEQLEP (179 aa)). A phosphoserine mark is found at Ser11, Ser193, Ser194, Ser209, and Ser226. A coiled-coil region spans residues 170-204 (VLEEAEQLEPRVSALEEDMDDVESSEEEEEEDEKL). The interval 181 to 312 (VSALEEDMDD…SHKKSRRGNE (132 aa)) is disordered. A compositionally biased stretch (acidic residues) spans 184–202 (LEEDMDDVESSEEEEEEDE). The segment covering 203–224 (KLERVPSPDHRRRSYRDLDKPR) has biased composition (basic and acidic residues). Composition is skewed to basic residues over residues 225–294 (RSPA…RSHS) and 301–312 (KKSHKKSRRGNE).

This sequence belongs to the PRP38 family. In terms of assembly, component of the spliceosome B complex. Interacts (via N-terminal interaction domain) with ZMAT2 and MFAP1.

It localises to the nucleus. Functionally, involved in pre-mRNA splicing as a component of the spliceosome. The sequence is that of Pre-mRNA-splicing factor 38A (Prpf38a) from Mus musculus (Mouse).